Consider the following 445-residue polypeptide: Phosphoglucosamine mutase (445 aa).

The active-site Phosphoserine intermediate is the Ser99. 4 residues coordinate Mg(2+): Ser99, Asp242, Asp244, and Asp246. A Phosphoserine modification is found at Ser99.

It belongs to the phosphohexose mutase family. Requires Mg(2+) as cofactor. Activated by phosphorylation.

The enzyme catalyses alpha-D-glucosamine 1-phosphate = D-glucosamine 6-phosphate. Its function is as follows. Catalyzes the conversion of glucosamine-6-phosphate to glucosamine-1-phosphate. The sequence is that of Phosphoglucosamine mutase from Campylobacter jejuni subsp. jejuni serotype O:2 (strain ATCC 700819 / NCTC 11168).